We begin with the raw amino-acid sequence, 371 residues long: Cytochrome b (371 aa).

Transmembrane regions (helical) follow at residues Phe-25–Val-45, Trp-69–Ile-90, Trp-105–Leu-125, and Phe-170–Ile-190. Heme b-binding residues include His-75 and His-89. His-174 and His-188 together coordinate heme b. Residue His-193 coordinates a ubiquinone. Helical transmembrane passes span Tyr-218–Phe-238, Leu-280–His-300, Leu-312–Thr-332, and Tyr-339–Pro-358.

It belongs to the cytochrome b family. The cytochrome bc1 complex contains 3 respiratory subunits (MT-CYB, CYC1 and UQCRFS1), 2 core proteins (UQCRC1 and UQCRC2) and probably 6 low-molecular weight proteins. Requires heme b as cofactor.

It is found in the mitochondrion inner membrane. In terms of biological role, component of the ubiquinol-cytochrome c reductase complex (complex III or cytochrome b-c1 complex) that is part of the mitochondrial respiratory chain. The b-c1 complex mediates electron transfer from ubiquinol to cytochrome c. Contributes to the generation of a proton gradient across the mitochondrial membrane that is then used for ATP synthesis. The chain is Cytochrome b (MT-CYB) from Python regius (Ball python).